The primary structure comprises 355 residues: C-C chemokine receptor type 1 (355 aa).

Over 1-34 (MEISDFTEAYPTTTEFDYGDSTPCQKTAVRAFGA) the chain is Extracellular. The helical transmembrane segment at 35 to 60 (GLLPPLYSLVFIIGVVGNVLVILVLM) threads the bilayer. Residues 61–64 (QHRR) lie on the Cytoplasmic side of the membrane. Residues 65-91 (LQSMTSIYLFNLAVSDLVFLFTLPFWI) form a helical membrane-spanning segment. At 92-107 (DYKLKDDWIFGDAMCK) the chain is on the extracellular side. A disulfide bridge connects residues Cys-106 and Cys-183. A helical transmembrane segment spans residues 108 to 129 (LLSGFYYLGLYSEIFFIILLTI). Residues 130–146 (DRYLAIVHAVFALRART) lie on the Cytoplasmic side of the membrane. The chain crosses the membrane as a helical span at residues 147–171 (VTFGIITSIITWALAILASMPALYF). Residues 172-197 (FKAQWEFTHRTCSPHFPYKSLKQWKR) are Extracellular-facing. The chain crosses the membrane as a helical span at residues 198–223 (FQALKLNLLGLILPLLVMIICYAGII). The Cytoplasmic segment spans residues 224-239 (RILLRRPSEKKVKAVR). Residues 240-264 (LIFAITLLFFLLWTPYNLSVFVSAF) traverse the membrane as a helical segment. The Extracellular segment spans residues 265–281 (QDVLFTNQCEQSKQLDL). A helical transmembrane segment spans residues 282 to 305 (AMQVTEVIAYTHCCVNPIIYVFVG). At 306–355 (ERFWKYLRQLFQRHVAIPLAKWLPFLSVDQLERTSSISPSTGEHELSAGF) the chain is on the cytoplasmic side.

This sequence belongs to the G-protein coupled receptor 1 family. In terms of assembly, interacts with CREB3. Interacts with CCL3. Interacts with CCL15. Interacts with CCL23. Interacts with GNAI1. Interacts with PF4/CXCL4. As to expression, detected in the heart, spleen, lung, peritoneal exudate cells and leukocytes.

It localises to the cell membrane. Functionally, chemokine receptor that plays a crucial role in regulating immune cell migration, inflammation, and immune responses. Contributes to the inflammatory response by recruiting immune cells, such as monocytes, macrophages, T-cells, and dendritic cells, to sites of inflammation for the clearance of pathogens and the resolution of tissue damage. When activated by its ligands including CCL3, CCL5-9, CCL13-16 and CCL23, triggers a signaling cascade within immune cells, leading to their migration towards the source of the chemokine. For example, mediates neutrophil migration after activation by CCL3 leading to the sequential release of TNF-alpha and leukotriene B4. Also mediates monocyte migration upon CXCL4 binding. Activation by CCL5 results in neuroinflammation through the ERK1/2 signaling pathway. The protein is C-C chemokine receptor type 1 (Ccr1) of Mus musculus (Mouse).